A 429-amino-acid polypeptide reads, in one-letter code: Adenylosuccinate synthetase (429 aa).

GTP is bound by residues 12 to 18 and 40 to 42; these read GDEGKGK and GHT. The active-site Proton acceptor is the Asp-13. Residues Asp-13 and Gly-40 each coordinate Mg(2+). Residues 13–16, 38–41, Thr-128, Arg-142, Gln-223, Thr-238, and Arg-302 each bind IMP; these read DEGK and NAGH. Catalysis depends on His-41, which acts as the Proton donor. Substrate is bound at residue 298–304; the sequence is VNTGRPR. GTP contacts are provided by residues Arg-304, 330–332, and 412–414; these read KLD and GVG.

The protein belongs to the adenylosuccinate synthetase family. Homodimer. Mg(2+) is required as a cofactor.

It localises to the cytoplasm. The catalysed reaction is IMP + L-aspartate + GTP = N(6)-(1,2-dicarboxyethyl)-AMP + GDP + phosphate + 2 H(+). It participates in purine metabolism; AMP biosynthesis via de novo pathway; AMP from IMP: step 1/2. Plays an important role in the de novo pathway of purine nucleotide biosynthesis. Catalyzes the first committed step in the biosynthesis of AMP from IMP. This Micrococcus luteus (strain ATCC 4698 / DSM 20030 / JCM 1464 / CCM 169 / CCUG 5858 / IAM 1056 / NBRC 3333 / NCIMB 9278 / NCTC 2665 / VKM Ac-2230) (Micrococcus lysodeikticus) protein is Adenylosuccinate synthetase.